Consider the following 511-residue polypeptide: Bifunctional purine biosynthesis protein PurH (511 aa).

The MGS-like domain occupies 1–146; sequence MTKRALVSVS…KNHADVTVVV (146 aa).

Belongs to the PurH family.

It catalyses the reaction (6R)-10-formyltetrahydrofolate + 5-amino-1-(5-phospho-beta-D-ribosyl)imidazole-4-carboxamide = 5-formamido-1-(5-phospho-D-ribosyl)imidazole-4-carboxamide + (6S)-5,6,7,8-tetrahydrofolate. The catalysed reaction is IMP + H2O = 5-formamido-1-(5-phospho-D-ribosyl)imidazole-4-carboxamide. It participates in purine metabolism; IMP biosynthesis via de novo pathway; 5-formamido-1-(5-phospho-D-ribosyl)imidazole-4-carboxamide from 5-amino-1-(5-phospho-D-ribosyl)imidazole-4-carboxamide (10-formyl THF route): step 1/1. It functions in the pathway purine metabolism; IMP biosynthesis via de novo pathway; IMP from 5-formamido-1-(5-phospho-D-ribosyl)imidazole-4-carboxamide: step 1/1. This chain is Bifunctional purine biosynthesis protein PurH, found in Shouchella clausii (strain KSM-K16) (Alkalihalobacillus clausii).